The sequence spans 337 residues: Aspartate carbamoyltransferase catalytic subunit (337 aa).

R57 and T58 together coordinate carbamoyl phosphate. Residue K86 coordinates L-aspartate. R107, H135, and Q138 together coordinate carbamoyl phosphate. The L-aspartate site is built by R172 and R234. Carbamoyl phosphate is bound by residues L274 and P275.

The protein belongs to the aspartate/ornithine carbamoyltransferase superfamily. ATCase family. As to quaternary structure, heterododecamer (2C3:3R2) of six catalytic PyrB chains organized as two trimers (C3), and six regulatory PyrI chains organized as three dimers (R2).

It carries out the reaction carbamoyl phosphate + L-aspartate = N-carbamoyl-L-aspartate + phosphate + H(+). It participates in pyrimidine metabolism; UMP biosynthesis via de novo pathway; (S)-dihydroorotate from bicarbonate: step 2/3. In terms of biological role, catalyzes the condensation of carbamoyl phosphate and aspartate to form carbamoyl aspartate and inorganic phosphate, the committed step in the de novo pyrimidine nucleotide biosynthesis pathway. In Saccharophagus degradans (strain 2-40 / ATCC 43961 / DSM 17024), this protein is Aspartate carbamoyltransferase catalytic subunit.